The chain runs to 861 residues: Homeobox-leucine zipper protein HOX29 (861 aa).

The segment at residues Asp-2–Lys-65 is a DNA-binding region (homeobox). A coiled-coil region spans residues Arg-57 to Val-99. Residues Arg-162–Ile-390 enclose the START domain.

Belongs to the HD-ZIP homeobox family. Class III subfamily. As to expression, expressed in roots, stems and leaf blades.

It localises to the nucleus. Its function is as follows. Probable transcription factor. This chain is Homeobox-leucine zipper protein HOX29 (HOX29), found in Oryza sativa subsp. indica (Rice).